The chain runs to 931 residues: GPI ethanolamine phosphate transferase 1 (931 aa).

A topological domain (cytoplasmic) is located at residue methionine 1. A helical membrane pass occupies residues 2-24 (LLFFTLGLLIHFVFFASIFDIYF). At 25–442 (TSPLVHGMTP…SYYHTYDRFF (418 aa)) the chain is on the lumenal side. N-linked (GlcNAc...) asparagine glycosylation is found at asparagine 128, asparagine 192, and asparagine 350. The helical transmembrane segment at 443-463 (LGVNVVIGFVGWISYASLLII) threads the bilayer. The Cytoplasmic portion of the chain corresponds to 464–482 (KSHSNLIKGVSKEVKKPSH). Residues 483-503 (LLPCSFVAIGILVAFFLLIQA) form a helical membrane-spanning segment. The Lumenal segment spans residues 504 to 508 (CPWTY). A helical transmembrane segment spans residues 509–529 (YVYGLLPLPIWYAVLREFQVI). Residues 530-543 (QDLVVSVLTYPLSH) lie on the Cytoplasmic side of the membrane. The helical transmembrane segment at 544–564 (FVGYLLAFTLGIEVLVLSFFY) threads the bilayer. Residue arginine 565 is a topological domain, lumenal. The chain crosses the membrane as a helical span at residues 566–586 (YMLTAGLTAFAAWPFLTRLWT). Residues 587–591 (RAKMT) are Cytoplasmic-facing. The helical transmembrane segment at 592 to 612 (SLSWTFFSLLLAVFPLMPVVG) threads the bilayer. Over 613 to 618 (RKPDIS) the chain is Lumenal. A helical transmembrane segment spans residues 619–639 (LVMGAGLLVLLLSLCVVTSLM). The Cytoplasmic portion of the chain corresponds to 640–649 (KRKDSFIKEE). A helical transmembrane segment spans residues 650 to 670 (LLVHLLQVLSTVLSMYVVYST). The Lumenal portion of the chain corresponds to 671–685 (QSSLLRKQGLPLMNQ). The helical transmembrane segment at 686 to 706 (IISWATLASSLVVPLLSSPVL) threads the bilayer. The Cytoplasmic portion of the chain corresponds to 707–723 (FQRLFSILLSLMSTYLL). The chain crosses the membrane as a helical span at residues 724 to 744 (LSTGYEALFPLVLSCLMFVWI). The Lumenal segment spans residues 745–786 (NIEQETLQQSGVCCKQKLTSIQFSYNTDITQFRQLYLDDIRR). Residues 787 to 807 (AFFLVFFLVTAFFGTGNIASI) traverse the membrane as a helical segment. The Cytoplasmic segment spans residues 808 to 824 (NSFDLASVYCFLTVFSP). A helical transmembrane segment spans residues 825–845 (FMMGALMMWKILIPFVLVMCA). Topologically, residues 846–858 (FEAVQLTTQLSSK) are lumenal. Residues 859 to 879 (SLFLIVLVISDIMALHFFFLV) traverse the membrane as a helical segment. The Cytoplasmic segment spans residues 880–894 (KDYGSWLDIGTSISH). The chain crosses the membrane as a helical span at residues 895–915 (YVIVMSMTIFLVFLNGLAQLL). Residues 916–931 (TTKKLRLCGKPKSHFM) lie on the Lumenal side of the membrane.

It belongs to the PIGG/PIGN/PIGO family. PIGN subfamily.

The protein resides in the endoplasmic reticulum membrane. The protein operates within glycolipid biosynthesis; glycosylphosphatidylinositol-anchor biosynthesis. Ethanolamine phosphate transferase that catalyzes an ethanolamine phosphate (EtNP) transfer from phosphatidylethanolamine (PE) to the 2-OH position of the first alpha-1,4-linked mannose of the alpha-D-Man-(1-&gt;6)-alpha-D-Man-(1-&gt;4)-alpha-D-GlcN-(1-&gt;6)-(1-radyl,2-acyl-sn-glycero-3-phospho)-2-acyl-inositol (also termed H3) intermediate to generate an alpha-D-Man-(1-&gt;6)-2-PEtn-alpha-D-Man-(1-&gt;4)-alpha-D-GlcN-(1-&gt;6)-(1-radyl,2-acyl-sn-glycero-3-phospho)-2-acyl-inositol and participates in the eighth step of the glycosylphosphatidylinositol-anchor biosynthesis. May act as suppressor of replication stress and chromosome missegregation. This is GPI ethanolamine phosphate transferase 1 from Homo sapiens (Human).